Here is a 176-residue protein sequence, read N- to C-terminus: T cell receptor beta constant 1 (176 aa).

The 110-residue stretch at 8–117 folds into the Ig-like C1-type domain; it reads PEVAVFEPSE…WTQDRAKPVT (110 aa). The cysteines at positions 30 and 95 are disulfide-linked. Residue Asn-69 is glycosylated (N-linked (GlcNAc...) asparagine). Residues 130-144 are connecting peptide; it reads CGFTSVSYQQGVLSA. The helical transmembrane segment at 150 to 170 threads the bilayer; that stretch reads ILLGKATLYAVLVSALVLMAM. Over 171-176 the chain is Cytoplasmic; that stretch reads VKRKDF.

Alpha-beta TR is a heterodimer composed of an alpha and beta chain; disulfide-linked. The alpha-beta TR is associated with the transmembrane signaling CD3 coreceptor proteins to form the TR-CD3 (TcR or TCR). The assembly of alpha-beta TR heterodimers with CD3 occurs in the endoplasmic reticulum where a single alpha-beta TR heterodimer associates with one CD3D-CD3E heterodimer, one CD3G-CD3E heterodimer and one CD247 homodimer forming a stable octameric structure. CD3D-CD3E and CD3G-CD3E heterodimers preferentially associate with TR alpha and TR beta chains, respectively. The association of the CD247 homodimer is the last step of TcR assembly in the endoplasmic reticulum and is required for transport to the cell surface.

It localises to the cell membrane. In terms of biological role, constant region of T cell receptor (TR) beta chain. Alpha-beta T cell receptors are antigen specific receptors which are essential to the immune response and are present on the cell surface of T lymphocytes. Recognize peptide-major histocompatibility (MH) (pMH) complexes that are displayed by antigen presenting cells (APC), a prerequisite for efficient T cell adaptive immunity against pathogens. Binding of alpha-beta TR to pMH complex initiates TR-CD3 clustering on the cell surface and intracellular activation of LCK that phosphorylates the ITAM motifs of CD3G, CD3D, CD3E and CD247 enabling the recruitment of ZAP70. In turn, ZAP70 phosphorylates LAT, which recruits numerous signaling molecules to form the LAT signalosome. The LAT signalosome propagates signal branching to three major signaling pathways, the calcium, the mitogen-activated protein kinase (MAPK) kinase and the nuclear factor NF-kappa-B (NF-kB) pathways, leading to the mobilization of transcription factors that are critical for gene expression and essential for T cell growth and differentiation. The T cell repertoire is generated in the thymus, by V-(D)-J rearrangement. This repertoire is then shaped by intrathymic selection events to generate a peripheral T cell pool of self-MH restricted, non-autoaggressive T cells. Post-thymic interaction of alpha-beta TR with the pMH complexes shapes TR structural and functional avidity. In Homo sapiens (Human), this protein is T cell receptor beta constant 1.